Reading from the N-terminus, the 282-residue chain is D-alanine aminotransferase (282 aa).

Tyr32 serves as a coordination point for substrate. Arg51 lines the pyridoxal 5'-phosphate pocket. Positions 99 and 101 each coordinate substrate. The Proton acceptor role is filled by Lys146. An N6-(pyridoxal phosphate)lysine modification is found at Lys146. Glu178 serves as a coordination point for pyridoxal 5'-phosphate.

It belongs to the class-IV pyridoxal-phosphate-dependent aminotransferase family. Homodimer. Requires pyridoxal 5'-phosphate as cofactor.

It catalyses the reaction D-alanine + 2-oxoglutarate = D-glutamate + pyruvate. Functionally, acts on the D-isomers of alanine, leucine, aspartate, glutamate, aminobutyrate, norvaline and asparagine. The enzyme transfers an amino group from a substrate D-amino acid to the pyridoxal phosphate cofactor to form pyridoxamine and an alpha-keto acid in the first half-reaction. The second half-reaction is the reverse of the first, transferring the amino group from the pyridoxamine to a second alpha-keto acid to form the product D-amino acid via a ping-pong mechanism. This is an important process in the formation of D-alanine and D-glutamate, which are essential bacterial cell wall components. This Staphylococcus aureus (strain MSSA476) protein is D-alanine aminotransferase (dat).